The primary structure comprises 100 residues: Large ribosomal subunit protein bL21 (100 aa).

The protein belongs to the bacterial ribosomal protein bL21 family. As to quaternary structure, part of the 50S ribosomal subunit. Contacts protein L20.

This protein binds to 23S rRNA in the presence of protein L20. The protein is Large ribosomal subunit protein bL21 of Ureaplasma urealyticum serovar 10 (strain ATCC 33699 / Western).